A 321-amino-acid polypeptide reads, in one-letter code: Probable protein phosphatase 2C 44 (321 aa).

Disordered regions lie at residues 1 to 36 and 51 to 70; these read MVGR…GGKK and NSSS…NKVT. The span at 9–31 shows a compositional bias: low complexity; the sequence is SASSSASCSPSSSAAGTSSSSSA. Polar residues predominate over residues 51 to 69; the sequence is NSSSTDTGKGRSKQSSNKV. A PPM-type phosphatase domain is found at 70–319; that stretch reads THGFHLVEGK…DDISCIVIRF (250 aa). Residues aspartate 107, glycine 108, aspartate 271, and aspartate 310 each coordinate Mn(2+).

This sequence belongs to the PP2C family. Mg(2+) is required as a cofactor. Requires Mn(2+) as cofactor.

It carries out the reaction O-phospho-L-seryl-[protein] + H2O = L-seryl-[protein] + phosphate. It catalyses the reaction O-phospho-L-threonyl-[protein] + H2O = L-threonyl-[protein] + phosphate. The protein is Probable protein phosphatase 2C 44 of Oryza sativa subsp. japonica (Rice).